The sequence spans 225 residues: PKHD-type hydroxylase Smlt1146 (225 aa).

Positions 78–177 (KYLPPRFNRY…RVASFFWVQS (100 aa)) constitute a Fe2OG dioxygenase domain. Fe cation contacts are provided by H96, D98, and H158. Residue R168 coordinates 2-oxoglutarate.

Fe(2+) is required as a cofactor. The cofactor is L-ascorbate.

This is PKHD-type hydroxylase Smlt1146 from Stenotrophomonas maltophilia (strain K279a).